The sequence spans 311 residues: Ribonuclease HIII (311 aa).

The 217-residue stretch at 95–311 (MSIVGSDEVG…NTEKAFRLLK (217 aa)) folds into the RNase H type-2 domain. The a divalent metal cation site is built by aspartate 101, glutamate 102, and aspartate 206.

Belongs to the RNase HII family. RnhC subfamily. Mn(2+) is required as a cofactor. Requires Mg(2+) as cofactor.

The protein localises to the cytoplasm. The enzyme catalyses Endonucleolytic cleavage to 5'-phosphomonoester.. Functionally, endonuclease that specifically degrades the RNA of RNA-DNA hybrids. This is Ribonuclease HIII from Bacillus cereus (strain 03BB102).